The following is a 397-amino-acid chain: Phosphoglycerate transport regulatory protein PgtC (397 aa).

An N-terminal signal peptide occupies residues 1–24 (MFGSCQAYSRELVMATTFSPSATA). A helical membrane pass occupies residues 102-117 (TSVAVAVSGFGLLINR).

Its subcellular location is the cell membrane. Its function is as follows. Required for pgtP expression, it may act jointly with the PgtA/PgtB signaling proteins. The chain is Phosphoglycerate transport regulatory protein PgtC (pgtC) from Salmonella typhi.